The chain runs to 594 residues: Protein TRANSPORT INHIBITOR RESPONSE 1 (594 aa).

The 48-residue stretch at 3–50 (KRIALSFPEEVLEHVFSFIQLDKDRNSVSLVCKSWYEIERWCRRKVFI) folds into the F-box domain. K74 contacts 1D-myo-inositol hexakisphosphate. The segment at 81 to 82 (DF) is interaction with auxin-responsive proteins. 1D-myo-inositol hexakisphosphate-binding positions include 113 to 114 (KR) and R344. An interaction with auxin-responsive proteins region spans residues 347-352 (PSEPFV). 401–403 (RFR) is a 1D-myo-inositol hexakisphosphate binding site. A (indol-3-yl)acetate-binding site is contributed by R403. Positions 405–409 (CIIEP) are interaction with auxin-responsive proteins. R436 serves as a coordination point for 1D-myo-inositol hexakisphosphate. Position 438 to 439 (438 to 439 (SL)) interacts with (indol-3-yl)acetate. Positions 464 to 465 (AF) are interaction with auxin-responsive proteins. 1D-myo-inositol hexakisphosphate-binding positions include 484-485 (RK) and R509.

As to quaternary structure, interacts with auxin. Part of a SCF E3 ubiquitin ligase complex SCF(TIR1) composed of SKP1, CUL1, RBX1 and TIR1. SCF(TIR1) interacts with the COP9 signalosome (CSN) complex. Interacts with Aux/IAA proteins (IAA3, IAA7, IAA12 and IAA17) in an auxin-dependent manner. The interaction with IAA3, a negative regulator of auxin responses, is promoted by auxin, but repressed by juglon (5-hydroxy-1,4-naphthoquinone). Interactions with auxin-responsive proteins is inactivated by auxin antagonists. Expressed in roots, stems, leaves and flowers. In adult plants, mostly expressed in floral stigma, anther filaments, abscission zones and vascular tissues.

The protein localises to the nucleus. The protein operates within protein modification; protein ubiquitination. Auxin receptor that mediates Aux/IAA proteins proteasomal degradation and auxin-regulated transcription. The SCF(TIR1) E3 ubiquitin ligase complex is involved in auxin-mediated signaling pathway that regulate root and hypocotyl growth, lateral root formation, cell elongation, and gravitropism. Appears to allow pericycle cells to overcome G2 arrest prior to lateral root development. Plays a role in ethylene signaling in roots. Confers sensitivity to the virulent bacterial pathogen P.syringae. The sequence is that of Protein TRANSPORT INHIBITOR RESPONSE 1 (TIR1) from Arabidopsis thaliana (Mouse-ear cress).